Consider the following 304-residue polypeptide: Homoserine kinase (304 aa).

91-101 (PLGKGMGSSAA) lines the ATP pocket.

This sequence belongs to the GHMP kinase family. Homoserine kinase subfamily.

The protein resides in the cytoplasm. The enzyme catalyses L-homoserine + ATP = O-phospho-L-homoserine + ADP + H(+). It functions in the pathway amino-acid biosynthesis; L-threonine biosynthesis; L-threonine from L-aspartate: step 4/5. Functionally, catalyzes the ATP-dependent phosphorylation of L-homoserine to L-homoserine phosphate. The polypeptide is Homoserine kinase (Solibacter usitatus (strain Ellin6076)).